The primary structure comprises 291 residues: MEGMDVDLDPELMQKFSCLGTTDKDVLISEFQRLLGFQLNPAGCAFFLDMTNWNLQAAIGAYYDFESPNISVPSMSFVEDVTIGEGESIPPDTQFIKTWRIQNSGAEAWPPGVCLKYVGGDQFGHVNMVMVRSLEPQEIADVSVQMCSPSRAGMYQGQWRMCTATGLYYGDVIWVILSVEVGGLLGVTQQLSSFETEFNTQPHRKVEGNFNPFASPQKNRQSDENNLTDPGGSEFDSISKNTWAPVPEQSEQDQDRLSQSSVNLSPSSPANNLSVVTYSKGLHGPYPFGQS.

Residues 199 to 291 (NTQPHRKVEG…LHGPYPFGQS (93 aa)) are disordered. The segment covering 212–228 (PFASPQKNRQSDENNLT) has biased composition (polar residues). Residues Ser-215, Ser-222, and Ser-265 each carry the phosphoserine modification. The span at 257–276 (LSQSSVNLSPSSPANNLSVV) shows a compositional bias: low complexity.

In terms of assembly, interacts with IRF3; the interaction inhibits IRF3 binding to its DNA consensus sequence.

The protein resides in the cytoplasm. The protein localises to the nucleus. In terms of biological role, negative regulator of innate antiviral response. Blocks IRF3-dependent cytokine production such as IFNA, IFNB and TNF. Interacts with IRF3 and inhibits IRF3 recruitment to type I IFN promoter sequences while also reducing nuclear levels of the coactivators EP300 and CREBBP. The chain is Protein ILRUN from Mus musculus (Mouse).